We begin with the raw amino-acid sequence, 218 residues long: Adenylate kinase (218 aa).

Residue 10–15 (GAGKGT) coordinates ATP. Residues 30 to 59 (STGDMLRAAVKEGSELGLKVKEIMNSGGLV) are NMP. AMP is bound by residues Thr-31, Arg-36, 57 to 59 (GLV), 85 to 88 (GFPR), and Gln-92. Residues 122-159 (GRRVHPGSGRVYHVDYNPPKEEGKDDVTGEALIQRDDD) form an LID region. ATP is bound by residues Arg-123 and 132–133 (VY). AMP is bound by residues Arg-156 and Arg-167. Gly-203 contributes to the ATP binding site.

The protein belongs to the adenylate kinase family. In terms of assembly, monomer.

It localises to the cytoplasm. It carries out the reaction AMP + ATP = 2 ADP. It participates in purine metabolism; AMP biosynthesis via salvage pathway; AMP from ADP: step 1/1. Its function is as follows. Catalyzes the reversible transfer of the terminal phosphate group between ATP and AMP. Plays an important role in cellular energy homeostasis and in adenine nucleotide metabolism. The sequence is that of Adenylate kinase from Chromohalobacter salexigens (strain ATCC BAA-138 / DSM 3043 / CIP 106854 / NCIMB 13768 / 1H11).